Here is a 203-residue protein sequence, read N- to C-terminus: Amelogenin, Y isoform (203 aa).

Positions methionine 1–alanine 16 are cleaved as a signal peptide. A disordered region spans residues methionine 116–arginine 180. The segment covering glycine 120–histidine 130 has biased composition (polar residues). Positions glutamine 131 to phenylalanine 142 are enriched in low complexity. The span at glutamine 143–arginine 180 shows a compositional bias: pro residues.

This sequence belongs to the amelogenin family.

Its subcellular location is the secreted. It localises to the extracellular space. The protein resides in the extracellular matrix. Plays a role in biomineralization. Seems to regulate the formation of crystallites during the secretory stage of tooth enamel development. Thought to play a major role in the structural organization and mineralization of developing enamel. The protein is Amelogenin, Y isoform (AMELY) of Pan troglodytes (Chimpanzee).